The chain runs to 574 residues: MAYRMDRQAYAETYGPTTGDRMRLADTELILEVERDFTTYGEEVKFGGGKVIRDGMGQSQQSRANGAVDTVITNALILDWWGIVKADIGLRDGRIVAIGKAGNPDITDGIDIVIGPGTEAIAGEGHIVTAGAIDSHIHFICPQQIETALASGVTTMLGGGTGPATGTNATTCTPGSFHISRMLQAAEGLPMNLGFFGKGNASTTEALEEQVLAGACGLKLHEDWGTTPAAIDCCLSVADRFDVQVCIHTDTLNEAGFVEDTIRAIGGRTIHTFHTEGAGGGHAPDIIRICGESNVLPSSTNPTRPYTRNTLEEHLDMLMVCHHLDPAIPEDVAFAESRIRRETIAAEDILHDLGAFSIIASDSQAMGRVGEVITRTFQTAHKMKVQRGPLPEDAANPRGTRNDNNRLKRYIAKVTINPAIAHGIDNHVGSVEVGKLADLVLWKPGFFGVRPELVIKGGSIIWAQMGDANASIPTPGPVHGRPMFAAFGKALAPSCLTFLSQAAIETDLPNKLGLQRACIPVLNTRTIGKAEMHNNNSLPKVEVDPQTYEVFADGELLTCDPAEELPMAQRYLLI.

One can recognise a Urease domain in the interval G131 to I574. Residues H136, H138, and K219 each contribute to the Ni(2+) site. K219 is modified (N6-carboxylysine). Substrate is bound at residue H221. Residues H248 and H274 each coordinate Ni(2+). The active-site Proton donor is the H322. Residue D362 participates in Ni(2+) binding.

It belongs to the metallo-dependent hydrolases superfamily. Urease alpha subunit family. As to quaternary structure, heterotrimer of UreA (gamma), UreB (beta) and UreC (alpha) subunits. Three heterotrimers associate to form the active enzyme. Ni cation serves as cofactor. In terms of processing, carboxylation allows a single lysine to coordinate two nickel ions.

It localises to the cytoplasm. The catalysed reaction is urea + 2 H2O + H(+) = hydrogencarbonate + 2 NH4(+). Its pathway is nitrogen metabolism; urea degradation; CO(2) and NH(3) from urea (urease route): step 1/1. The protein is Urease subunit alpha of Prochlorococcus marinus (strain MIT 9303).